The chain runs to 255 residues: MRFDILTLFPAMFQGPLTESILKRAQQAGKITIHLHDIRDWATDRHRTVDDAPYGGGAGMVMKAEPLAAAIRAVQAADEPGGPVVLLTPDGELFNQSIARELATLPRLILVCGHYEGIDERVRERLVDREISIGDYVLTGGELAAMVVVDAVARLVPGVIDSESIVEESHSDFLLEYPHYTRPAVWEGLAVPSILLSGHHGEIARWRRSERLRRTLARRPDLLARAAAAGVLTKADLALLAEWGWDGMSEGGWMS.

S-adenosyl-L-methionine contacts are provided by residues Gly113 and 133–138; that span reads IGDYVL.

Belongs to the RNA methyltransferase TrmD family. As to quaternary structure, homodimer.

Its subcellular location is the cytoplasm. The enzyme catalyses guanosine(37) in tRNA + S-adenosyl-L-methionine = N(1)-methylguanosine(37) in tRNA + S-adenosyl-L-homocysteine + H(+). In terms of biological role, specifically methylates guanosine-37 in various tRNAs. This is tRNA (guanine-N(1)-)-methyltransferase from Chloroflexus aggregans (strain MD-66 / DSM 9485).